Here is a 356-residue protein sequence, read N- to C-terminus: Tyrosine recombinase XerS (356 aa).

A Core-binding (CB) domain is found at 16-121 (LMPWFVLEYY…ALSSLYKYLT (106 aa)). In terms of domain architecture, Tyr recombinase spans 169–354 (KFLDYVENEY…VNDEQKNALD (186 aa)). Active-site residues include Arg-210, Lys-234, His-306, Arg-309, and His-332. Tyr-341 (O-(3'-phospho-DNA)-tyrosine intermediate) is an active-site residue.

Belongs to the 'phage' integrase family. XerS subfamily.

The protein resides in the cytoplasm. FtsK is required for recombination. Its function is as follows. Site-specific tyrosine recombinase, which acts by catalyzing the cutting and rejoining of the recombining DNA molecules. Essential to convert dimers of the bacterial chromosome into monomers to permit their segregation at cell division. The sequence is that of Tyrosine recombinase XerS from Streptococcus thermophilus (strain CNRZ 1066).